The sequence spans 262 residues: Aconitate isomerase (262 aa).

A signal peptide spans 1-22 (MFPRLPTLALGALLLASTPLLA).

Monomer.

It catalyses the reaction trans-aconitate = cis-aconitate. With respect to regulation, activated more than 1.5 fold by Ca(2+), Mg(2+), Mn(2+), Ni(2+), Fe(2+), DDT and 1,10-phenanthroline. Strongly inhibited by Ag(+) and Hg(+). Inhibited by addition of 20% (v/v) glycerol. No effect by addition of NADH or NADPH. Its function is as follows. Involved in assimilation of trans-aconitic acid. Preference for cis-aconitic acid is 14-fold higher than for trans-aconitic acid. Not active on intermediates of tricarboxylic acid (TCA) cycle including citric acid, succinic acid, fumaric acid, and 2-oxoglutaric acid or on other dicarboxilic acids including itaconic acid, formic acid, citraconic acid or maleic acid. This is Aconitate isomerase from Pseudomonas sp.